A 154-amino-acid chain; its full sequence is Crossover junction endodeoxyribonuclease RuvC (154 aa).

Catalysis depends on residues aspartate 7, glutamate 67, and aspartate 139. Mg(2+) is bound by residues aspartate 7, glutamate 67, and aspartate 139.

Belongs to the RuvC family. In terms of assembly, homodimer which binds Holliday junction (HJ) DNA. The HJ becomes 2-fold symmetrical on binding to RuvC with unstacked arms; it has a different conformation from HJ DNA in complex with RuvA. In the full resolvosome a probable DNA-RuvA(4)-RuvB(12)-RuvC(2) complex forms which resolves the HJ. Mg(2+) serves as cofactor.

The protein localises to the cytoplasm. The enzyme catalyses Endonucleolytic cleavage at a junction such as a reciprocal single-stranded crossover between two homologous DNA duplexes (Holliday junction).. The RuvA-RuvB-RuvC complex processes Holliday junction (HJ) DNA during genetic recombination and DNA repair. Endonuclease that resolves HJ intermediates. Cleaves cruciform DNA by making single-stranded nicks across the HJ at symmetrical positions within the homologous arms, yielding a 5'-phosphate and a 3'-hydroxyl group; requires a central core of homology in the junction. The consensus cleavage sequence is 5'-(A/T)TT(C/G)-3'. Cleavage occurs on the 3'-side of the TT dinucleotide at the point of strand exchange. HJ branch migration catalyzed by RuvA-RuvB allows RuvC to scan DNA until it finds its consensus sequence, where it cleaves and resolves the cruciform DNA. This chain is Crossover junction endodeoxyribonuclease RuvC, found in Synechococcus sp. (strain WH7803).